The following is a 513-amino-acid chain: ATP synthase subunit alpha (513 aa).

169-176 (GDRQIGKS) contacts ATP.

The protein belongs to the ATPase alpha/beta chains family. F-type ATPases have 2 components, CF(1) - the catalytic core - and CF(0) - the membrane proton channel. CF(1) has five subunits: alpha(3), beta(3), gamma(1), delta(1), epsilon(1). CF(0) has three main subunits: a(1), b(2) and c(9-12). The alpha and beta chains form an alternating ring which encloses part of the gamma chain. CF(1) is attached to CF(0) by a central stalk formed by the gamma and epsilon chains, while a peripheral stalk is formed by the delta and b chains.

Its subcellular location is the cell inner membrane. It carries out the reaction ATP + H2O + 4 H(+)(in) = ADP + phosphate + 5 H(+)(out). Produces ATP from ADP in the presence of a proton gradient across the membrane. The alpha chain is a regulatory subunit. The polypeptide is ATP synthase subunit alpha (Colwellia psychrerythraea (strain 34H / ATCC BAA-681) (Vibrio psychroerythus)).